We begin with the raw amino-acid sequence, 3996 residues long: Probable E3 ubiquitin-protein ligase HECTD4 (3996 aa).

The chain crosses the membrane as a helical span at residues 282 to 302 (TCIIRCILVVFQVVFKFFFSP). A compositionally biased stretch (polar residues) spans 1494-1510 (PTASEPDTTLTKTSPKN). Disordered stretches follow at residues 1494–1524 (PTASEPDTTLTKTSPKNSLKGDKDPGEESEA) and 1616–1637 (PETVSGLSTGDKKKTAQTSICR). Phosphothreonine is present on Thr2080. Disordered regions lie at residues 2219-2245 (FITSGPDPHPPPIADDESDDDDDDDIP), 2859-2919 (TSAT…PTVL), 3017-3053 (EDTKKPKDKAEGGDGKVEPEKTLAFPGTDSMEVSTSS), and 3327-3403 (FDKS…QEVP). Positions 2232-2245 (ADDESDDDDDDDIP) are enriched in acidic residues. The span at 2866-2887 (LSDSSSSSSSSPGQTPQSPSLL) shows a compositional bias: low complexity. Over residues 2888–2897 (SKRKKVKMKR) the composition is skewed to basic residues. 3 stretches are compositionally biased toward basic and acidic residues: residues 3017–3037 (EDTKKPKDKAEGGDGKVEPEK), 3327–3341 (FDKSKYSKAGKEQHP), and 3370–3403 (LSEKKPTVKPKSPEKSKPDEKDPEKSPTKKQEVP). Residues 3627-3996 (SGGDPTYAFN…IHYREDPLSG (370 aa)) form the HECT domain. Cys3964 serves as the catalytic Glycyl thioester intermediate.

The protein resides in the membrane. It carries out the reaction S-ubiquitinyl-[E2 ubiquitin-conjugating enzyme]-L-cysteine + [acceptor protein]-L-lysine = [E2 ubiquitin-conjugating enzyme]-L-cysteine + N(6)-ubiquitinyl-[acceptor protein]-L-lysine.. Its pathway is protein modification; protein ubiquitination. Functionally, E3 ubiquitin-protein ligase which accepts ubiquitin from an E2 ubiquitin-conjugating enzyme in the form of a thioester and then directly transfers the ubiquitin to targeted substrates. In Homo sapiens (Human), this protein is Probable E3 ubiquitin-protein ligase HECTD4 (HECTD4).